We begin with the raw amino-acid sequence, 142 residues long: Hemoglobin subunit beta-C (142 aa).

One can recognise a Globin domain in the interval 2–142 (PNKALITGFW…VASALAHRYH (141 aa)). The heme b site is built by His-59 and His-88.

It belongs to the globin family. As to quaternary structure, heterotetramer of two alpha chains and two beta chains. In terms of tissue distribution, red blood cells.

In terms of biological role, involved in oxygen transport from the lung to the various peripheral tissues. The chain is Hemoglobin subunit beta-C (HBBC) from Ovis aries (Sheep).